A 197-amino-acid polypeptide reads, in one-letter code: Thymidine kinase (197 aa).

ATP-binding positions include 9 to 16 (SAMDAGKT) and 87 to 90 (DEIH). Glu88 acts as the Proton acceptor in catalysis. Residues Cys145, Cys147, Cys187, and His190 each coordinate Zn(2+).

Belongs to the thymidine kinase family. As to quaternary structure, homotetramer.

It localises to the cytoplasm. It catalyses the reaction thymidine + ATP = dTMP + ADP + H(+). The protein is Thymidine kinase of Francisella tularensis subsp. holarctica (strain LVS).